Reading from the N-terminus, the 65-residue chain is Large ribosomal subunit protein bL28 (65 aa).

Belongs to the bacterial ribosomal protein bL28 family.

The sequence is that of Large ribosomal subunit protein bL28 from Lachnoclostridium phytofermentans (strain ATCC 700394 / DSM 18823 / ISDg) (Clostridium phytofermentans).